The chain runs to 307 residues: 2-dehydropantoate 2-reductase (307 aa).

NADP(+) is bound by residues 7-12 (GSGAMG), asparagine 102, and alanine 128. Substrate is bound at residue asparagine 102. The active-site Proton donor is the lysine 184. The substrate site is built by asparagine 188, asparagine 192, and serine 255. NADP(+) is bound at residue glutamate 268.

The protein belongs to the ketopantoate reductase family.

Its subcellular location is the cytoplasm. It catalyses the reaction (R)-pantoate + NADP(+) = 2-dehydropantoate + NADPH + H(+). Its pathway is cofactor biosynthesis; (R)-pantothenate biosynthesis; (R)-pantoate from 3-methyl-2-oxobutanoate: step 2/2. Functionally, catalyzes the NADPH-dependent reduction of ketopantoate into pantoic acid. The sequence is that of 2-dehydropantoate 2-reductase (apbA) from Streptococcus pyogenes serotype M6 (strain ATCC BAA-946 / MGAS10394).